A 387-amino-acid polypeptide reads, in one-letter code: Chromatin modification-related protein EAF3 (387 aa).

The interval 52–96 is disordered; the sequence is NTHKRKRGPRASLPAAGATPDGDDSNDKNRHFSPKEGKPDVPADL. Over residues 76–92 the composition is skewed to basic and acidic residues; sequence SNDKNRHFSPKEGKPDV. Positions 100 to 126 constitute a Tudor-knot domain; that stretch reads NEDKICYYVHYKGWKNTWDEWVGEERV. A disordered region spans residues 159 to 197; the sequence is PPEALSETASPAPTTKRKSMASKDSPAEGPRPVKRRGGL. Positions 211-385 constitute an MRG domain; the sequence is KRKEIALVVP…ASPAYEALSK (175 aa).

Belongs to the MRG family. In terms of assembly, component of the NuA4 histone acetyltransferase complex.

Its subcellular location is the nucleus. Functionally, involved in deacetylation of histones, chromatin assembly and chromosome segregation. May act as a transcriptional oscillator, directing histone deacetylases to specific chromosomal domains. Component of the NuA4 histone acetyltransferase complex which is involved in transcriptional activation of selected genes principally by acetylation of nucleosomal histone H4 and H2A. The NuA4 complex is also involved in DNA repair. This Yarrowia lipolytica (strain CLIB 122 / E 150) (Yeast) protein is Chromatin modification-related protein EAF3 (EAF3).